A 225-amino-acid polypeptide reads, in one-letter code: Cyanamide hydratase DDI2 (225 aa).

Positions 52-162 (VLNHSLRVFQ…LQIATTLDNV (111 aa)) constitute an HD domain.

The protein belongs to the cyanamide dehydrase family. In terms of assembly, homohexamer. The cofactor is Zn(2+).

The enzyme catalyses urea = cyanamide + H2O. Its function is as follows. Cyanamide hydratase involved in the detoxification and/or utilization of cyanamide, a toxic nitrile compound distributed widely in the environment. In Saccharomyces cerevisiae (strain ATCC 204508 / S288c) (Baker's yeast), this protein is Cyanamide hydratase DDI2.